Consider the following 805-residue polypeptide: Angiotensin-converting enzyme 2 (805 aa).

Residues 1 to 17 (MSSSSWLLLSLVAVTAA) form the signal peptide. Over 18 to 740 (QSTIEEQAKT…LGPPNQPPVS (723 aa)) the chain is Extracellular. One can recognise a Peptidase M2 domain in the interval 19–607 (STIEEQAKTF…QNKNSFVGWS (589 aa)). Residues 30 to 41 (DKFNHEAEDLFY) are interaction with SARS-CoV spike glycoprotein. The N-linked (GlcNAc...) asparagine glycan is linked to Asn-53. Positions 82–84 (MYP) are interaction with SARS-CoV spike glycoprotein. N-linked (GlcNAc...) asparagine glycosylation is found at Asn-90 and Asn-103. An intrachain disulfide couples Cys-133 to Cys-141. Arg-169 serves as a coordination point for chloride. Substrate is bound at residue Arg-273. N-linked (GlcNAc...) asparagine glycosylation is present at Asn-322. Cys-344 and Cys-361 are disulfide-bonded. Residue 345 to 346 (HP) coordinates substrate. An interaction with SARS-CoV spike glycoprotein region spans residues 353–357 (KGDFR). Zn(2+) is bound at residue His-374. Catalysis depends on Glu-375, which acts as the Proton acceptor. Residues His-378 and Glu-402 each coordinate Zn(2+). N-linked (GlcNAc...) asparagine glycosylation is present at Asn-432. Positions 477 and 481 each coordinate chloride. The active-site Proton donor is the His-505. Tyr-515 is a binding site for substrate. Cys-530 and Cys-542 are oxidised to a cystine. Asn-546 carries N-linked (GlcNAc...) asparagine glycosylation. Residues 614–805 (ADQSIKVRIS…QNTDDVQTSF (192 aa)) form the Collectrin-like domain. The interval 652–659 (RQYFLKVK) is essential for cleavage by ADAM17. A glycan (N-linked (GlcNAc...) asparagine) is linked at Asn-690. The segment at 697–716 (RTEVEKAIRMSRSRINDAFR) is essential for cleavage by TMPRSS11D and TMPRSS2. Residues 741–761 (IWLIVFGVVMGVIVVGIVILI) form a helical membrane-spanning segment. Topologically, residues 762–805 (FTGIRDRKKKNKARSGENPYASIDISKGENNPGFQNTDDVQTSF) are cytoplasmic. Residues 772–805 (NKARSGENPYASIDISKGENNPGFQNTDDVQTSF) form a disordered region. The short motif at 778 to 786 (ENPYASIDI) is the LIR element. Tyr-781 carries the post-translational modification Phosphotyrosine. Positions 781 to 784 (YASI) match the Endocytic sorting signal motif. The SH2-binding signature appears at 781–785 (YASID). Ser-783 carries the post-translational modification Phosphoserine. A Glycyl lysine isopeptide (Lys-Gly) (interchain with G-Cter in ubiquitin) cross-link involves residue Lys-788. A compositionally biased stretch (polar residues) spans 789–805 (GENNPGFQNTDDVQTSF). The PTB signature appears at 792-795 (NPGF). Residues 803 to 805 (TSF) carry the PDZ-binding motif.

Belongs to the peptidase M2 family. Homodimer. Interacts with the catalytically active form of TMPRSS2. Interacts with SLC6A19; this interaction is essential for expression and function of SLC6A19 in intestine. Interacts with ITGA5:ITGB1. Probably interacts (via endocytic sorting signal motif) with AP2M1; the interaction is inhibited by phosphorylation of Tyr-781. Interacts (via PDZ-binding motif) with NHERF1 (via PDZ domains); the interaction may enhance ACE2 membrane residence. In terms of assembly, (Microbial infection) Interacts with SARS coronavirus/SARS-CoV spike protein. As to quaternary structure, (Microbial infection) Interacts with SARS coronavirus-2/SARS-CoV-2 spike protein (via RBD domain). (Microbial infection) Interacts with human coronavirus NL63 spike protein. In terms of assembly, (Microbial infection) Interacts with human coronavirus NL63/HCoV-NL63 spike glycoprotein. As to quaternary structure, (Microbial infection) Interacts with SARS coronavirus-2/SARS-CoV-2 spike protein; the interaction is increased by AVP/Arg-vasopressin with which they may form a complex. It depends on Zn(2+) as a cofactor. The cofactor is chloride. Post-translationally, N-glycosylation on Asn-90 may limit SARS infectivity. Proteolytic cleavage by ADAM17 generates a secreted form. Also cleaved by serine proteases: TMPRSS2, TMPRSS11D and HPN/TMPRSS1. In terms of processing, phosphorylated. Phosphorylation at Tyr-781 probably inhibits interaction with AP2M1 and enables interactions with proteins containing SH2 domains. Post-translationally, ubiquitinated. Ubiquitinated on Lys-788 via 'Lys-48'-linked ubiquitin. 'Lys-48'-linked deubiquitinated by USP50 on the Lys-788; leading to its stabilization. Expressed in endothelial cells from small and large arteries, and in arterial smooth muscle cells (at protein level). Expressed in enterocytes of the small intestine, Leydig cells and Sertoli cells (at protein level). Expressed in the renal proximal tubule and the small intestine (at protein level). Expressed in heart, kidney, testis, and gastrointestinal system (at protein level). In lung, expressed at low levels in some alveolar type 2 cells, the expression seems to be individual-specific (at protein level). Expressed in nasal epithelial cells (at protein level). Coexpressed with TMPRSS2 within some lung alveolar type 2 cells, ileal absorptive enterocytes, intestinal epithelial cells, cornea, gallbladder and nasal goblet secretory cells. Coexpressed with TMPRSS4 within mature enterocytes. In terms of tissue distribution, expressed in nasal and bronchial epithelial cells (at protein level).

The protein resides in the secreted. It is found in the cell membrane. It localises to the cytoplasm. Its subcellular location is the cell projection. The protein localises to the cilium. The protein resides in the apical cell membrane. It carries out the reaction angiotensin II + H2O = angiotensin-(1-7) + L-phenylalanine. It catalyses the reaction angiotensin I + H2O = angiotensin-(1-9) + L-leucine. The enzyme catalyses bradykinin(1-8) + H2O = bradykinin(1-7) + L-phenylalanine. The catalysed reaction is neurotensin + H2O = neurotensin-(1-12) + L-leucine. It carries out the reaction neurotensin-(1-8) + H2O = neurotensin-(1-7) + L-arginine. It catalyses the reaction kinetensin + H2O = kinetensin-(1-8) + L-leucine. The enzyme catalyses dynorphin A-(1-13) + H2O = dynorphin A-(1-12) + L-lysine. The catalysed reaction is apelin-13 + H2O = apelin-12 + L-phenylalanine. It carries out the reaction [Pyr1]apelin-13 + H2O = [Pyr1]apelin-12 + L-phenylalanine. It catalyses the reaction apelin-17 + H2O = apelin-16 + L-phenylalanine. The enzyme catalyses beta-casomorphin-7 + H2O = beta-casomorphin-6 + L-isoleucine. The catalysed reaction is neocasomorphin + H2O = neocasomorphin-(1-5) + L-isoleucine. Its activity is regulated as follows. Regulated by chloride and fluoride, but not bromide. Chloride increases angiotensin I and decreases angiotensin II cleavage. Inhibited by MLN-4760, cFP_Leu, and EDTA, but not by the ACE inhibitors lisinopril, captopril and enalaprilat. Highly potent and selective in vitro ACE2 inhibitors were identified. Its function is as follows. Essential counter-regulatory carboxypeptidase of the renin-angiotensin hormone system that is a critical regulator of blood volume, systemic vascular resistance, and thus cardiovascular homeostasis. Converts angiotensin I to angiotensin 1-9, a nine-amino acid peptide with anti-hypertrophic effects in cardiomyocytes, and angiotensin II to angiotensin 1-7, which then acts as a beneficial vasodilator and anti-proliferation agent, counterbalancing the actions of the vasoconstrictor angiotensin II. Also removes the C-terminal residue from three other vasoactive peptides, neurotensin, kinetensin, and des-Arg bradykinin, but is not active on bradykinin. Also cleaves other biological peptides, such as apelins (apelin-13, [Pyr1]apelin-13, apelin-17, apelin-36), casomorphins (beta-casomorphin-7, neocasomorphin) and dynorphin A with high efficiency. In addition, ACE2 C-terminus is homologous to collectrin and is responsible for the trafficking of the neutral amino acid transporter SL6A19 to the plasma membrane of gut epithelial cells via direct interaction, regulating its expression on the cell surface and its catalytic activity. (Microbial infection) Acts as a receptor for human coronaviruses SARS-CoV and SARS-CoV-2, as well as human coronavirus NL63/HCoV-NL63. In terms of biological role, non-functional as a carboxypeptidase. Functionally, (Microbial infection) Non-functional as a receptor for human coronavirus SARS-CoV-2. This Homo sapiens (Human) protein is Angiotensin-converting enzyme 2.